We begin with the raw amino-acid sequence, 156 residues long: D-aminoacyl-tRNA deacylase (156 aa).

Positions 139 to 140 (GP) match the Gly-cisPro motif, important for rejection of L-amino acids motif.

This sequence belongs to the DTD family. Homodimer.

It localises to the cytoplasm. The enzyme catalyses glycyl-tRNA(Ala) + H2O = tRNA(Ala) + glycine + H(+). The catalysed reaction is a D-aminoacyl-tRNA + H2O = a tRNA + a D-alpha-amino acid + H(+). Functionally, an aminoacyl-tRNA editing enzyme that deacylates mischarged D-aminoacyl-tRNAs. Also deacylates mischarged glycyl-tRNA(Ala), protecting cells against glycine mischarging by AlaRS. Acts via tRNA-based rather than protein-based catalysis; rejects L-amino acids rather than detecting D-amino acids in the active site. By recycling D-aminoacyl-tRNA to D-amino acids and free tRNA molecules, this enzyme counteracts the toxicity associated with the formation of D-aminoacyl-tRNA entities in vivo and helps enforce protein L-homochirality. The sequence is that of D-aminoacyl-tRNA deacylase from Marinobacter nauticus (strain ATCC 700491 / DSM 11845 / VT8) (Marinobacter aquaeolei).